We begin with the raw amino-acid sequence, 993 residues long: DNA-binding protein SMUBP-2 (993 aa).

Ala2 bears the N-acetylalanine mark. Residues 213 to 220 (GPPGTGKT), Gln402, Tyr441, and Glu570 contribute to the ATP site. An SS DNA-binding region spans residues 637–783 (TAFEYLDDIV…KARHITVSRR (147 aa)). Disordered regions lie at residues 650–723 (YTHE…GPDR), 765–815 (LRHD…EPVT), and 837–872 (RQQS…KGPV). Composition is skewed to polar residues over residues 667 to 683 (PSTS…SGQE) and 703 to 716 (HVQS…NGSD). In terms of domain architecture, R3H spans 721–784 (PDRTEHFRAT…ARHITVSRRS (64 aa)). The span at 765 to 775 (LRHDSTGEGKA) shows a compositional bias: basic and acidic residues. The segment covering 784 to 794 (SPASSGSVAPQ) has biased composition (low complexity). A phosphoserine mark is found at Ser797 and Ser800. Over residues 837–847 (RQQSSQAQTAK) the composition is skewed to polar residues. Positions 862 to 866 (KKKKK) match the Nuclear localization signal motif. Residues 889–938 (VKADNTCSFSKCSVSTTTLGQFCMHCSHRYYLSHHLPEIHGCGEKARAHA) form an AN1-type; degenerate zinc finger. Cys911, Cys914, His928, and Cys930 together coordinate Zn(2+). The disordered stretch occupies residues 953 to 993 (GTKDRALDPAKRAQLQRRLDKKLGELSSQRTSRKKEKERGT). The span at 954–976 (TKDRALDPAKRAQLQRRLDKKLG) shows a compositional bias: basic and acidic residues.

This sequence belongs to the DNA2/NAM7 helicase family. As to quaternary structure, homooligomer. Interacts with RUVBL1. Interacts with RUVBL2. Interacts with GTF3C1. Interacts with ABT1. Interacts with ribosomes. As to expression, in all tissues examined.

It is found in the nucleus. The protein localises to the cytoplasm. It localises to the cell projection. The protein resides in the axon. It carries out the reaction ATP + H2O = ADP + phosphate + H(+). Its function is as follows. 5' to 3' helicase that unwinds RNA and DNA duplexes in an ATP-dependent reaction. Specific to 5'-phosphorylated single-stranded guanine-rich sequences. May play a role in RNA metabolism, ribosome biogenesis or initiation of translation. May play a role in regulation of transcription. Interacts with tRNA-Tyr. This chain is DNA-binding protein SMUBP-2 (Ighmbp2), found in Mus musculus (Mouse).